Consider the following 309-residue polypeptide: D-alanine--D-alanine ligase (309 aa).

Positions 105–304 (KQIWHSVGLP…FNDLVERILA (200 aa)) constitute an ATP-grasp domain. 135 to 190 (LQELGGRVIVKPAREGSSIGMSIADNGRSLALALQHAAEFDDDLLVEQWVEGAEYT) provides a ligand contact to ATP. Positions 258, 271, and 273 each coordinate Mg(2+).

Belongs to the D-alanine--D-alanine ligase family. Mg(2+) is required as a cofactor. The cofactor is Mn(2+).

The protein localises to the cytoplasm. The catalysed reaction is 2 D-alanine + ATP = D-alanyl-D-alanine + ADP + phosphate + H(+). It functions in the pathway cell wall biogenesis; peptidoglycan biosynthesis. In terms of biological role, cell wall formation. This chain is D-alanine--D-alanine ligase, found in Idiomarina loihiensis (strain ATCC BAA-735 / DSM 15497 / L2-TR).